Here is a 121-residue protein sequence, read N- to C-terminus: Putative iron-sulfur cluster insertion protein ErpA (121 aa).

The iron-sulfur cluster site is built by Cys49, Cys113, and Cys115.

The protein belongs to the HesB/IscA family. Homodimer. Requires iron-sulfur cluster as cofactor.

Functionally, required for insertion of 4Fe-4S clusters. The sequence is that of Putative iron-sulfur cluster insertion protein ErpA from Nitrosomonas eutropha (strain DSM 101675 / C91 / Nm57).